We begin with the raw amino-acid sequence, 288 residues long: Diaminopimelate epimerase (288 aa).

Substrate contacts are provided by Asn-13, Gln-46, and Asn-66. Catalysis depends on Cys-75, which acts as the Proton donor. Substrate-binding positions include Gly-76–Asn-77, Asn-166, Asn-199, and Glu-217–Arg-218. Cys-226 serves as the catalytic Proton acceptor. Gly-227 to Thr-228 lines the substrate pocket.

The protein belongs to the diaminopimelate epimerase family. Homodimer.

The protein resides in the cytoplasm. The enzyme catalyses (2S,6S)-2,6-diaminopimelate = meso-2,6-diaminopimelate. The protein operates within amino-acid biosynthesis; L-lysine biosynthesis via DAP pathway; DL-2,6-diaminopimelate from LL-2,6-diaminopimelate: step 1/1. In terms of biological role, catalyzes the stereoinversion of LL-2,6-diaminopimelate (L,L-DAP) to meso-diaminopimelate (meso-DAP), a precursor of L-lysine and an essential component of the bacterial peptidoglycan. The polypeptide is Diaminopimelate epimerase (Cupriavidus pinatubonensis (strain JMP 134 / LMG 1197) (Cupriavidus necator (strain JMP 134))).